The primary structure comprises 2388 residues: MNLDSLSLALSQISYLVDNLTKKNYRASQLEIQHIVNRHGPEADRHLLRCLFSHVDFSGDGKSSGKDFHQTQFLIQECASLITKPNFISTLSYAIDNPLHYQKSLKPSPHLFAQLSKVLKLSKVQEVIFGLALLNSSSCELRGFAAQFVKQKLPDLLRSYVDVDVSGSQEGGFQDIAIEVLHLLLSNLLFGQKGAFGVGQEQIVAFLKTLRRDFPQERCPVVLAPLLYPEKRDILMDRILADSGGITKTMMDSSLADFMQEVGYSFCASVEECRNVIVQFGVREVTAVQVARVLGMMARTHSGLTDGIPLQSITSPGSGIWSDGKDKNDAVQPHTWNVEVLIDVVKELNPTLNFKEVTYELDNPSFQIRDSKGLQTVVYGIQRGLGIEAFPVDLVYRPWKNAEGQLSFIQHSLVNPDVFCFADYACHAVATDILKAPPEDDNREIATWKSLDLIESLLRLAELGQYEQVKQLFAYPIKHCPDMLVLALLQINTTWHTLRHELISTLMPIFLGNHPNSAIILHYAWHGQGQSPSIRQLIMHAMAEWYMRGEQYDQARLSRILDVAQDLKALSMLLNGTPFAFVIDLAALASRREYLKLDKWLTDKIREHGEPFIQACMTFLKRRCPSILGGLAPEKDQPKSAQLPPETLATMLACLQACAGSVSQELSETILTMVANCSNVVNKARQPPPGVMPKGRPPSTSSLDAISPVQIDPIAAMASLSIGGSAAPHTQSMPVFPPNLGSAFSTPQSPAKAFPPLTAPNQSTAFSGLGGLTSQLPGGLGTGSLTGMGTGGLSLPTVNSDPFGQRKLSTSGLNQPTFQQTDLSQVWPEANQHFSKEIDDEANSYFQRIYNQPPHPTMSVDEVLEMLQRFKDSNIKREREVFNCMLRNLFEEYRFFPQYPDKELHITACLFGGIIEKGLVTYMALGLALRYVLEALRKPYQSKMYFFGIAALDRFKNRLKDYPQYCQHLASISHFMQFPHHLQEYIEYGQQSRDPPVKMQGSITTPGSIALSQAQTPAKPASSSAVTTPTTTTPAKTITITRPTGVSFKKDVPPSINTTNIDTLLVATDLAGQIVEPPENVQEKIAFIFNNLSQSNMTQKVEELKETVKDDYMPWVSQYLVMKRVSIELNFHSLYSNFLDALKHLEFNKMVLAETYRNIKVLLTSDKAAANFSDRSLLKNLGHWLGMITLAKNKPILHTDLDLKSLLLEAYVKGQQELLYVVPFVAKVLESSVRSVVFRPPNPWTMAIMNVLAELHQEHDLKLNLKFEIEVLCKNLVLDINDLKPGTLLKDKDRLKSLDEQLSAPKKDVKQPEELPPMTSASEYAIRTAGKLWASVEKQESDAVFTATATAPPPSTTCTTTVPPQPQYSYHDIHVYSLAGLAPHITLNPTIPLFQAHPQLKQCVRQAIERAVQELVHPVVDRSIKIAMTTCEQIVRKDFALDSEESRMRIAAHHMMRNLTAGMAMITCREPLLMSIATNLKNSFATAMRAASPQQREMMEQAAAQLAQDNCELACCFIQKTAVEKAGPEMDKRPATEFELRKHARQEGRRYCDPVVLTYQAERMPEQIRLKVGGVDPKQLAVYEEFARNVPGFLPTNDLTQPTGFLAQPMKQQAWATDDVAQIYDKCITELEQHLHAIPPALSMNPQSQALRSLLEAVAVARNSRDAIAALGLLQKAVEGLLDATSGADADLLLRYRECHLLVLKALQDGRAYGSPWCNKQITRCLIECRDEYKYNVEAVELLIRNHLVNMQQYDLHLAQSMENGLNYMAVAFAMQLVKILLVDERSVSHVTEAEFFHTIETLMRINAHSRGNAPEGLPQLMDVLRSNFDAMMERAHGGPNFMMHSGISQASEYDDPPGLREKAEYLLREWVNLYHSAAAGRDSTKAFSAFVGQMHQQGILKTDDLITRFFRLCTEMCVEISYRAQAEQQHNPAANPTMIRAKCYHNLDAFVRLIALLVKHSGEATNTVTKINLLNKVLGIVVGVLLQDHEVRQSEFQQLPYHRIFIMLLLELNAPEHVLETINFQTLTAFCNTFHILRPTKAPGFVYAWLELISHRIFIARMLAHTPQQKGWPMYAQLLIDLFKYLAPFLRNVELTKPMQILYKGTLRVLLVLLHDFPEFLCDYHYGFCDVIPPNCIQLRNLILSAFPRNMRLPDPFTPNLKVDMLSEINIAPRILTNFTGVMPPQFKKDLDSYLKTRSPVTFLSELRSNLQVSNEPGNRYNIQLINALVLYVGTQAIAHIHNKGSTPSMSTITHSAHMDIFQNLAVDLDTEGRYLFLNAIANQLRYPNSHTHYFSCTMLYLFAEANTEAIQEQITRVLLERLIVNRPHPWGLLITFIELIKNPAFKFWNHEFVHCAPEIEKLFQSVAQCCMGQKQAQQVMEGTGAS.

4 short sequence motifs (LXXLL) span residues 153 to 157 (LPDLL), 181 to 185 (LHLLL), 223 to 227 (LAPLL), and 570 to 574 (LSMLL). Disordered regions lie at residues 1012-1035 (SQAQ…TTPA) and 1300-1320 (EQLS…PMTS). The segment covering 1016–1035 (TPAKPASSSAVTTPTTTTPA) has biased composition (low complexity). Residues 1076-1617 (EPPENVQEKI…QPMKQQAWAT (542 aa)) are interaction with CCR4-NOT complex catalytic subunits. Residues 1300 to 1313 (EQLSAPKKDVKQPE) show a composition bias toward basic and acidic residues. Short sequence motifs (LXXLL) lie at residues 1651-1655 (LRSLL), 1954-1958 (LIALL), and 2108-2112 (LRVLL).

The protein belongs to the CNOT1 family. In terms of assembly, component of the CCR4-NOT complex.

The protein resides in the cytoplasm. It localises to the nucleus. Scaffolding component of the CCR4-NOT complex which is one of the major cellular mRNA deadenylases and is linked to various cellular processes including bulk mRNA degradation, miRNA-mediated repression, translational repression during translational initiation and general transcription regulation. Additional complex functions may be a consequence of its influence on mRNA expression. Its scaffolding function implies its interaction with the catalytic complex module and diverse RNA-binding proteins mediating the complex recruitment to selected mRNA 3'UTRs. Acts as a transcriptional repressor. Represses the ligand-dependent transcriptional activation by nuclear receptors. The sequence is that of CCR4-NOT transcription complex subunit 1 (cnot1) from Xenopus tropicalis (Western clawed frog).